Here is a 478-residue protein sequence, read N- to C-terminus: NADH-quinone oxidoreductase subunit N (478 aa).

Transmembrane regions (helical) follow at residues 5–25 (LASPEIVLALCGLVILLVGVA), 37–57 (MLTLGAFLVTGLLTVSGALGL), 68–88 (FAVMVKLLILSGASIAVVLSL), 99–119 (FEFPVLTLFSTVGMMVMVSAS), 121–141 (FMTLYMGLELMSLAIYVLAAF), 156–176 (FVLGSLASGLLLYGISLIYGF), 199–219 (LTVGVVFVIAGLAFKISAAPF), 231–251 (PTPVTAFMGTAPKVAAIAMML), 268–288 (VVALISVVSMVWGALAAIGQT), 293–313 (LMAYSSIGHMGYALVGLAAGS), 320–340 (LLIYLVTYVFMNTGTFACILA), 365–385 (ALLLAIFMFSMAGIPPMSGFF), 401–421 (LLWGLAVIGVLTSVIGAYYYL), and 446–466 (VVAVGSAIFTALFFLFPAPIL).

It belongs to the complex I subunit 2 family. In terms of assembly, NDH-1 is composed of 14 different subunits. Subunits NuoA, H, J, K, L, M, N constitute the membrane sector of the complex.

The protein resides in the cell inner membrane. The enzyme catalyses a quinone + NADH + 5 H(+)(in) = a quinol + NAD(+) + 4 H(+)(out). Functionally, NDH-1 shuttles electrons from NADH, via FMN and iron-sulfur (Fe-S) centers, to quinones in the respiratory chain. The immediate electron acceptor for the enzyme in this species is believed to be ubiquinone. Couples the redox reaction to proton translocation (for every two electrons transferred, four hydrogen ions are translocated across the cytoplasmic membrane), and thus conserves the redox energy in a proton gradient. The polypeptide is NADH-quinone oxidoreductase subunit N (Granulibacter bethesdensis (strain ATCC BAA-1260 / CGDNIH1)).